Reading from the N-terminus, the 175-residue chain is NADH-ubiquinone oxidoreductase chain 6 (175 aa).

5 helical membrane-spanning segments follow: residues 1-21 (MMTYFVFILSTVFVIGFVGFS), 27-47 (VYGGVGLIISGGVGCGIVMNF), 49-69 (GSFLGLMVFLIYLGGMMVVFG), 88-108 (VVLGAFVSGLFMEMLLVLYVL), and 149-169 (YGVWLVVVTGWSLFIAVVVIM).

It belongs to the complex I subunit 6 family. Core subunit of respiratory chain NADH dehydrogenase (Complex I) which is composed of 45 different subunits.

It is found in the mitochondrion inner membrane. It carries out the reaction a ubiquinone + NADH + 5 H(+)(in) = a ubiquinol + NAD(+) + 4 H(+)(out). Functionally, core subunit of the mitochondrial membrane respiratory chain NADH dehydrogenase (Complex I) which catalyzes electron transfer from NADH through the respiratory chain, using ubiquinone as an electron acceptor. Essential for the catalytic activity and assembly of complex I. The chain is NADH-ubiquinone oxidoreductase chain 6 (MT-ND6) from Pteropus dasymallus (Ryukyu flying fox).